Here is a 120-residue protein sequence, read N- to C-terminus: Sirohydrochlorin cobaltochelatase (120 aa).

The active-site Proton acceptor is the histidine 9. Histidine 9 contributes to the Co(2+) binding site. Substrate-binding positions include glutamine 43 and 68–73 (FAAGTH). Histidine 73 lines the Co(2+) pocket.

It belongs to the CbiX family. CbiXS subfamily. As to quaternary structure, homotetramer; dimer of dimers.

The catalysed reaction is Co-sirohydrochlorin + 2 H(+) = sirohydrochlorin + Co(2+). Its pathway is cofactor biosynthesis; adenosylcobalamin biosynthesis; cob(II)yrinate a,c-diamide from sirohydrochlorin (anaerobic route): step 1/10. In terms of biological role, catalyzes the insertion of Co(2+) into sirohydrochlorin as part of the anaerobic pathway to cobalamin biosynthesis. This is Sirohydrochlorin cobaltochelatase from Sulfurisphaera tokodaii (strain DSM 16993 / JCM 10545 / NBRC 100140 / 7) (Sulfolobus tokodaii).